The chain runs to 433 residues: Serine hydroxymethyltransferase (433 aa).

(6S)-5,6,7,8-tetrahydrofolate-binding positions include Leu121 and 125–127; that span reads GHI. Lys231 carries the post-translational modification N6-(pyridoxal phosphate)lysine.

This sequence belongs to the SHMT family. As to quaternary structure, homodimer. Requires pyridoxal 5'-phosphate as cofactor.

Its subcellular location is the cytoplasm. The protein operates within amino-acid biosynthesis; glycine biosynthesis; glycine from L-serine: step 1/1. Catalyzes the reversible interconversion of serine and glycine with a modified folate serving as the one-carbon carrier. Also exhibits a pteridine-independent aldolase activity toward beta-hydroxyamino acids, producing glycine and aldehydes, via a retro-aldol mechanism. This Picrophilus torridus (strain ATCC 700027 / DSM 9790 / JCM 10055 / NBRC 100828 / KAW 2/3) protein is Serine hydroxymethyltransferase.